A 55-amino-acid polypeptide reads, in one-letter code: Large ribosomal subunit protein bL33 (55 aa).

Belongs to the bacterial ribosomal protein bL33 family.

The protein is Large ribosomal subunit protein bL33 of Bartonella henselae (strain ATCC 49882 / DSM 28221 / CCUG 30454 / Houston 1) (Rochalimaea henselae).